Consider the following 138-residue polypeptide: Putative pre-16S rRNA nuclease (138 aa).

Belongs to the YqgF nuclease family.

It localises to the cytoplasm. In terms of biological role, could be a nuclease involved in processing of the 5'-end of pre-16S rRNA. This chain is Putative pre-16S rRNA nuclease, found in Bacteroides thetaiotaomicron (strain ATCC 29148 / DSM 2079 / JCM 5827 / CCUG 10774 / NCTC 10582 / VPI-5482 / E50).